The primary structure comprises 811 residues: Ribonucleoside-diphosphate reductase large subunit (811 aa).

Substrate is bound by residues threonine 231, 246–247 (SC), glycine 277, 450–454 (NLCTE), and 636–640 (PTASS). A disulfide bond links cysteine 247 and cysteine 467. Asparagine 450 acts as the Proton acceptor in catalysis. Cysteine 452 functions as the Cysteine radical intermediate in the catalytic mechanism. Catalysis depends on glutamate 454, which acts as the Proton acceptor.

Belongs to the ribonucleoside diphosphate reductase large chain family. As to quaternary structure, heterotetramer composed of a homodimer of the large subunit (R1) and a homodimer of the small subunit (R2). Larger multisubunit protein complex are also active, composed of (R1)n(R2)n.

The enzyme catalyses a 2'-deoxyribonucleoside 5'-diphosphate + [thioredoxin]-disulfide + H2O = a ribonucleoside 5'-diphosphate + [thioredoxin]-dithiol. Its function is as follows. Ribonucleoside-diphosphate reductase holoenzyme provides the precursors necessary for viral DNA synthesis. Allows virus growth in non-dividing cells, as well as reactivation from latency in infected hosts. Catalyzes the biosynthesis of deoxyribonucleotides from the corresponding ribonucleotides. The sequence is that of Ribonucleoside-diphosphate reductase large subunit from Amazona oratrix (yellow-headed parrot).